The following is a 491-amino-acid chain: 1-aminocyclopropane-1-carboxylate synthase (491 aa).

Lysine 278 carries the N6-(pyridoxal phosphate)lysine modification.

This sequence belongs to the class-I pyridoxal-phosphate-dependent aminotransferase family. Homodimer. The cofactor is pyridoxal 5'-phosphate.

It catalyses the reaction S-adenosyl-L-methionine = 1-aminocyclopropane-1-carboxylate + S-methyl-5'-thioadenosine + H(+). The protein operates within alkene biosynthesis; ethylene biosynthesis via S-adenosyl-L-methionine; ethylene from S-adenosyl-L-methionine: step 1/2. In terms of biological role, catalyzes the formation of 1-aminocyclopropane-1-carboxylate, a direct precursor of ethylene in higher plants. The chain is 1-aminocyclopropane-1-carboxylate synthase (ACS1) from Nicotiana tabacum (Common tobacco).